A 187-amino-acid chain; its full sequence is Elongation factor P (187 aa).

The protein belongs to the elongation factor P family.

It localises to the cytoplasm. It functions in the pathway protein biosynthesis; polypeptide chain elongation. Its function is as follows. Involved in peptide bond synthesis. Stimulates efficient translation and peptide-bond synthesis on native or reconstituted 70S ribosomes in vitro. Probably functions indirectly by altering the affinity of the ribosome for aminoacyl-tRNA, thus increasing their reactivity as acceptors for peptidyl transferase. This Erythrobacter litoralis (strain HTCC2594) protein is Elongation factor P.